A 385-amino-acid chain; its full sequence is tRNA-specific 2-thiouridylase MnmA (385 aa).

ATP-binding positions include 30–37 and M56; that span reads GMSGGVDS. The tract at residues 118 to 120 is interaction with target base in tRNA; that stretch reads NPD. C123 serves as the catalytic Nucleophile. Cysteines 123 and 220 form a disulfide. G148 provides a ligand contact to ATP. The segment at 170 to 172 is interaction with tRNA; sequence KDQ. Catalysis depends on C220, which acts as the Cysteine persulfide intermediate. The interaction with tRNA stretch occupies residues 332–333; that stretch reads RY.

It belongs to the MnmA/TRMU family.

It localises to the cytoplasm. The enzyme catalyses S-sulfanyl-L-cysteinyl-[protein] + uridine(34) in tRNA + AH2 + ATP = 2-thiouridine(34) in tRNA + L-cysteinyl-[protein] + A + AMP + diphosphate + H(+). Functionally, catalyzes the 2-thiolation of uridine at the wobble position (U34) of tRNA, leading to the formation of s(2)U34. The chain is tRNA-specific 2-thiouridylase MnmA from Haemophilus influenzae (strain PittGG).